The following is a 209-amino-acid chain: Large ribosomal subunit protein uL3 (209 aa).

The disordered stretch occupies residues 127–166 (NFGGGQRTHGQSDRLRAPGSIGGASDPSKTFKGTKMGGRM).

Belongs to the universal ribosomal protein uL3 family. Part of the 50S ribosomal subunit. Forms a cluster with proteins L14 and L19.

In terms of biological role, one of the primary rRNA binding proteins, it binds directly near the 3'-end of the 23S rRNA, where it nucleates assembly of the 50S subunit. The protein is Large ribosomal subunit protein uL3 of Chlorobium phaeovibrioides (strain DSM 265 / 1930) (Prosthecochloris vibrioformis (strain DSM 265)).